We begin with the raw amino-acid sequence, 352 residues long: UDP-N-acetylglucosamine--N-acetylmuramyl-(pentapeptide) pyrophosphoryl-undecaprenol N-acetylglucosamine transferase (352 aa).

2 residues coordinate UDP-N-acetyl-alpha-D-glucosamine: Ser-195 and Gln-287.

It belongs to the glycosyltransferase 28 family. MurG subfamily.

Its subcellular location is the cell membrane. It carries out the reaction Mur2Ac(oyl-L-Ala-gamma-D-Glu-L-Lys-D-Ala-D-Ala)-di-trans,octa-cis-undecaprenyl diphosphate + UDP-N-acetyl-alpha-D-glucosamine = beta-D-GlcNAc-(1-&gt;4)-Mur2Ac(oyl-L-Ala-gamma-D-Glu-L-Lys-D-Ala-D-Ala)-di-trans,octa-cis-undecaprenyl diphosphate + UDP + H(+). It participates in cell wall biogenesis; peptidoglycan biosynthesis. Cell wall formation. Catalyzes the transfer of a GlcNAc subunit on undecaprenyl-pyrophosphoryl-MurNAc-pentapeptide (lipid intermediate I) to form undecaprenyl-pyrophosphoryl-MurNAc-(pentapeptide)GlcNAc (lipid intermediate II). The polypeptide is UDP-N-acetylglucosamine--N-acetylmuramyl-(pentapeptide) pyrophosphoryl-undecaprenol N-acetylglucosamine transferase (Streptococcus pneumoniae (strain JJA)).